Here is a 211-residue protein sequence, read N- to C-terminus: Superoxide dismutase [Cu-Zn], chloroplastic (211 aa).

A chloroplast-targeting transit peptide spans 1–57; that stretch reads MQAILAAAMAAQTLLFSATAPPASLFQSPSSARPFHSLRLAAGPAGAAAARALVVAD. Residues histidine 103, histidine 105, and histidine 120 each coordinate Cu cation. An intrachain disulfide couples cysteine 114 to cysteine 203. Zn(2+) contacts are provided by histidine 120, histidine 128, histidine 137, and aspartate 140. Residue histidine 177 participates in Cu cation binding.

The protein belongs to the Cu-Zn superoxide dismutase family. As to quaternary structure, homotetramer. Cu cation serves as cofactor. Zn(2+) is required as a cofactor.

The protein localises to the plastid. The protein resides in the chloroplast. The catalysed reaction is 2 superoxide + 2 H(+) = H2O2 + O2. Functionally, destroys radicals which are normally produced within the cells and which are toxic to biological systems. The polypeptide is Superoxide dismutase [Cu-Zn], chloroplastic (SODCP) (Oryza sativa subsp. japonica (Rice)).